A 138-amino-acid chain; its full sequence is F-box protein At4g12382 (138 aa).

Positions 7 to 53 (NPSFADLPSSLIEVIMSHLALKNNIRASAACKSWYEVGVSVRVVEKH) constitute an F-box domain.

The sequence is that of F-box protein At4g12382 from Arabidopsis thaliana (Mouse-ear cress).